Here is a 310-residue protein sequence, read N- to C-terminus: RING-H2 finger protein ATL60 (310 aa).

Residues 24–44 (VLLFSIVSIFTGILFLLLLHL) form a helical membrane-spanning segment. Residues 120 to 162 (CAVCLSDLVDGDKARVLPRCNHGFHVDCIDMWFQSHSTCPLCR) form an RING-type; atypical zinc finger. 2 disordered regions span residues 170 to 201 (DTTH…QDQS) and 240 to 260 (GNFA…RSQE). Over residues 179–201 (LPQNQNFESGHSTNQHNPSQDQS) the composition is skewed to polar residues.

This sequence belongs to the RING-type zinc finger family. ATL subfamily.

It localises to the membrane. The enzyme catalyses S-ubiquitinyl-[E2 ubiquitin-conjugating enzyme]-L-cysteine + [acceptor protein]-L-lysine = [E2 ubiquitin-conjugating enzyme]-L-cysteine + N(6)-ubiquitinyl-[acceptor protein]-L-lysine.. The protein operates within protein modification; protein ubiquitination. This chain is RING-H2 finger protein ATL60 (ATL60), found in Arabidopsis thaliana (Mouse-ear cress).